Reading from the N-terminus, the 275-residue chain is 4-hydroxy-3-methylbut-2-enyl diphosphate reductase (275 aa).

Residue Cys12 participates in [4Fe-4S] cluster binding. (2E)-4-hydroxy-3-methylbut-2-enyl diphosphate-binding residues include His40 and His70. Residues His40 and His70 each coordinate dimethylallyl diphosphate. His40 and His70 together coordinate isopentenyl diphosphate. Cys92 contributes to the [4Fe-4S] cluster binding site. Residue His119 coordinates (2E)-4-hydroxy-3-methylbut-2-enyl diphosphate. His119 contacts dimethylallyl diphosphate. His119 provides a ligand contact to isopentenyl diphosphate. Glu121 (proton donor) is an active-site residue. A (2E)-4-hydroxy-3-methylbut-2-enyl diphosphate-binding site is contributed by Thr151. Cys181 provides a ligand contact to [4Fe-4S] cluster. (2E)-4-hydroxy-3-methylbut-2-enyl diphosphate is bound by residues Ser209, Ser210, Asn211, and Ser251. Dimethylallyl diphosphate-binding residues include Ser209, Ser210, Asn211, and Ser251. Residues Ser209, Ser210, Asn211, and Ser251 each contribute to the isopentenyl diphosphate site.

Belongs to the IspH family. It depends on [4Fe-4S] cluster as a cofactor.

It catalyses the reaction isopentenyl diphosphate + 2 oxidized [2Fe-2S]-[ferredoxin] + H2O = (2E)-4-hydroxy-3-methylbut-2-enyl diphosphate + 2 reduced [2Fe-2S]-[ferredoxin] + 2 H(+). It carries out the reaction dimethylallyl diphosphate + 2 oxidized [2Fe-2S]-[ferredoxin] + H2O = (2E)-4-hydroxy-3-methylbut-2-enyl diphosphate + 2 reduced [2Fe-2S]-[ferredoxin] + 2 H(+). It participates in isoprenoid biosynthesis; dimethylallyl diphosphate biosynthesis; dimethylallyl diphosphate from (2E)-4-hydroxy-3-methylbutenyl diphosphate: step 1/1. Its pathway is isoprenoid biosynthesis; isopentenyl diphosphate biosynthesis via DXP pathway; isopentenyl diphosphate from 1-deoxy-D-xylulose 5-phosphate: step 6/6. Its function is as follows. Catalyzes the conversion of 1-hydroxy-2-methyl-2-(E)-butenyl 4-diphosphate (HMBPP) into a mixture of isopentenyl diphosphate (IPP) and dimethylallyl diphosphate (DMAPP). Acts in the terminal step of the DOXP/MEP pathway for isoprenoid precursor biosynthesis. The chain is 4-hydroxy-3-methylbut-2-enyl diphosphate reductase from Thermotoga maritima (strain ATCC 43589 / DSM 3109 / JCM 10099 / NBRC 100826 / MSB8).